The sequence spans 303 residues: UDP-3-O-acyl-N-acetylglucosamine deacetylase (303 aa).

Positions 78, 237, and 241 each coordinate Zn(2+). Histidine 264 acts as the Proton donor in catalysis.

Belongs to the LpxC family. It depends on Zn(2+) as a cofactor.

It catalyses the reaction a UDP-3-O-[(3R)-3-hydroxyacyl]-N-acetyl-alpha-D-glucosamine + H2O = a UDP-3-O-[(3R)-3-hydroxyacyl]-alpha-D-glucosamine + acetate. The protein operates within glycolipid biosynthesis; lipid IV(A) biosynthesis; lipid IV(A) from (3R)-3-hydroxytetradecanoyl-[acyl-carrier-protein] and UDP-N-acetyl-alpha-D-glucosamine: step 2/6. In terms of biological role, catalyzes the hydrolysis of UDP-3-O-myristoyl-N-acetylglucosamine to form UDP-3-O-myristoylglucosamine and acetate, the committed step in lipid A biosynthesis. The chain is UDP-3-O-acyl-N-acetylglucosamine deacetylase from Chromohalobacter salexigens (strain ATCC BAA-138 / DSM 3043 / CIP 106854 / NCIMB 13768 / 1H11).